A 115-amino-acid chain; its full sequence is Ribonuclease P protein component (115 aa).

Belongs to the RnpA family. In terms of assembly, consists of a catalytic RNA component (M1 or rnpB) and a protein subunit.

The enzyme catalyses Endonucleolytic cleavage of RNA, removing 5'-extranucleotides from tRNA precursor.. RNaseP catalyzes the removal of the 5'-leader sequence from pre-tRNA to produce the mature 5'-terminus. It can also cleave other RNA substrates such as 4.5S RNA. The protein component plays an auxiliary but essential role in vivo by binding to the 5'-leader sequence and broadening the substrate specificity of the ribozyme. The polypeptide is Ribonuclease P protein component (Staphylococcus epidermidis (strain ATCC 35984 / DSM 28319 / BCRC 17069 / CCUG 31568 / BM 3577 / RP62A)).